The following is a 580-amino-acid chain: 3-(3-hydroxy-phenyl)propionate/3-hydroxycinnamic acid hydroxylase (580 aa).

FAD is bound by residues 14 to 43 and 291 to 301; these read DVLV…VVEE and FRRGRLLLAGD.

It belongs to the PheA/TfdB FAD monooxygenase family. FAD serves as cofactor.

It carries out the reaction 3-(3-hydroxyphenyl)propanoate + NADH + O2 + H(+) = 3-(2,3-dihydroxyphenyl)propanoate + NAD(+) + H2O. The enzyme catalyses (2E)-3-(3-hydroxyphenyl)prop-2-enoate + NADH + O2 + H(+) = (2E)-3-(2,3-dihydroxyphenyl)prop-2-enoate + NAD(+) + H2O. The protein operates within aromatic compound metabolism; 3-phenylpropanoate degradation. Functionally, catalyzes the insertion of one atom of molecular oxygen into position 2 of the phenyl ring of 3-(3-hydroxyphenyl)propionate (3-HPP) and hydroxycinnamic acid (3HCI). The polypeptide is 3-(3-hydroxy-phenyl)propionate/3-hydroxycinnamic acid hydroxylase (Mycobacterium avium (strain 104)).